Here is a 245-residue protein sequence, read N- to C-terminus: Probable phosphatase YPTB2019 (245 aa).

Zn(2+)-binding residues include His7, His9, His15, His40, Glu73, His101, His131, Asp192, and His194.

This sequence belongs to the PHP family. In terms of assembly, homotrimer. It depends on Zn(2+) as a cofactor.

In Yersinia pseudotuberculosis serotype I (strain IP32953), this protein is Probable phosphatase YPTB2019.